The chain runs to 287 residues: Elongation factor Ts (287 aa).

An involved in Mg(2+) ion dislocation from EF-Tu region spans residues 80–83 (TDFL).

Belongs to the EF-Ts family.

The protein localises to the cytoplasm. Functionally, associates with the EF-Tu.GDP complex and induces the exchange of GDP to GTP. It remains bound to the aminoacyl-tRNA.EF-Tu.GTP complex up to the GTP hydrolysis stage on the ribosome. In Pseudomonas syringae pv. syringae (strain B728a), this protein is Elongation factor Ts.